The primary structure comprises 432 residues: Enolase (432 aa).

Gln167 lines the (2R)-2-phosphoglycerate pocket. Glu209 functions as the Proton donor in the catalytic mechanism. Asp246, Glu290, and Asp317 together coordinate Mg(2+). 4 residues coordinate (2R)-2-phosphoglycerate: Lys342, Arg371, Ser372, and Lys393. Lys342 serves as the catalytic Proton acceptor.

The protein belongs to the enolase family. In terms of assembly, component of the RNA degradosome, a multiprotein complex involved in RNA processing and mRNA degradation. The cofactor is Mg(2+).

It is found in the cytoplasm. Its subcellular location is the secreted. The protein resides in the cell surface. It catalyses the reaction (2R)-2-phosphoglycerate = phosphoenolpyruvate + H2O. It participates in carbohydrate degradation; glycolysis; pyruvate from D-glyceraldehyde 3-phosphate: step 4/5. Functionally, catalyzes the reversible conversion of 2-phosphoglycerate (2-PG) into phosphoenolpyruvate (PEP). It is essential for the degradation of carbohydrates via glycolysis. In Klebsiella pneumoniae (strain 342), this protein is Enolase.